The sequence spans 439 residues: O-fucosyltransferase 13 (439 aa).

Residues 8–28 (PLFVFVLTFSLLLVVILLSPS) form a helical; Signal-anchor for type II membrane protein membrane-spanning segment. N-linked (GlcNAc...) asparagine glycans are attached at residues Asn104 and Asn119. Substrate is bound at residue 238–240 (HLR). The N-linked (GlcNAc...) asparagine glycan is linked to Asn293.

Belongs to the glycosyltransferase GT106 family.

It localises to the membrane. Its pathway is glycan metabolism. In Arabidopsis thaliana (Mouse-ear cress), this protein is O-fucosyltransferase 13.